Here is a 106-residue protein sequence, read N- to C-terminus: UPF0145 protein BH0643 (106 aa).

This sequence belongs to the UPF0145 family.

The protein is UPF0145 protein BH0643 of Halalkalibacterium halodurans (strain ATCC BAA-125 / DSM 18197 / FERM 7344 / JCM 9153 / C-125) (Bacillus halodurans).